A 482-amino-acid chain; its full sequence is UDP-glucose 6-dehydrogenase 2 (482 aa).

Residues 8 to 13, Asp33, Arg38, 86 to 90, 127 to 128, and Glu163 contribute to the NAD(+) site; these read GAGYVG, VNTPT, and ST. Substrate contacts are provided by residues 159–163, 218–225, and 258–271; these read EFLAE, KLAANAFL, and RIGP…VGFG. Residue Cys274 is the Nucleophile of the active site. An NAD(+)-binding site is contributed by 274-277; it reads CFQK. 336 to 337 contacts substrate; that stretch reads FK. Arg344 is an NAD(+) binding site. Position 395 is a phosphoserine (Ser395). Position 449 (Arg449) interacts with substrate.

This sequence belongs to the UDP-glucose/GDP-mannose dehydrogenase family.

The catalysed reaction is UDP-alpha-D-glucose + 2 NAD(+) + H2O = UDP-alpha-D-glucuronate + 2 NADH + 3 H(+). Its pathway is nucleotide-sugar biosynthesis; UDP-alpha-D-glucuronate biosynthesis; UDP-alpha-D-glucuronate from UDP-alpha-D-glucose: step 1/1. Involved in the biosynthesis of UDP-glucuronic acid (UDP-GlcA), providing nucleotide sugars for cell-wall polymers. The protein is UDP-glucose 6-dehydrogenase 2 (UGD2) of Oryza sativa subsp. japonica (Rice).